Reading from the N-terminus, the 892-residue chain is Alanine--tRNA ligase (892 aa).

The Zn(2+) site is built by His594, His598, Cys702, and His706.

Belongs to the class-II aminoacyl-tRNA synthetase family. Zn(2+) is required as a cofactor.

Its subcellular location is the cytoplasm. It carries out the reaction tRNA(Ala) + L-alanine + ATP = L-alanyl-tRNA(Ala) + AMP + diphosphate. Functionally, catalyzes the attachment of alanine to tRNA(Ala) in a two-step reaction: alanine is first activated by ATP to form Ala-AMP and then transferred to the acceptor end of tRNA(Ala). Also edits incorrectly charged Ser-tRNA(Ala) and Gly-tRNA(Ala) via its editing domain. The sequence is that of Alanine--tRNA ligase from Pyrobaculum neutrophilum (strain DSM 2338 / JCM 9278 / NBRC 100436 / V24Sta) (Thermoproteus neutrophilus).